Here is a 383-residue protein sequence, read N- to C-terminus: Protein ctg-1 (383 aa).

A CRAL-TRIO domain is found at 73–247 (PPECLEKYCG…YWGGNLVENG (175 aa)). In terms of domain architecture, GOLD spans 271–380 (KKAMADYDQL…AKQLRYNIEI (110 aa)).

Highly expressed in cells of the pi uterine cell lineage.

The protein localises to the cytoplasm. Its subcellular location is the cytosol. Functionally, vesicle trafficking protein. Functions in uterine cells to promote basement membrane (BM) mobility and BM gap formation during tissue remodeling. This Caenorhabditis elegans protein is Protein ctg-1.